The following is an 899-amino-acid chain: Origin recognition complex subunit 5 (899 aa).

Disordered stretches follow at residues 27–47 (FSSP…NDDT), 100–166 (DRIN…EYKD), and 194–238 (KNLE…DGNL). Positions 105–160 (SEEETNINDDNNDDNNGDYDDDNNSDDDDDNDDNNNNDDNNNDDDEDVDDFEDIKE) are enriched in acidic residues. Residues 207-218 (SSDNSMTSSSEE) show a composition bias toward low complexity. Over residues 227 to 237 (ESDKESDKDGN) the composition is skewed to basic and acidic residues. Position 303-310 (303-310 (GLPGMGKT)) interacts with ATP. The tract at residues 409–469 (KRTTENIRSP…NNNSNNVRFN (61 aa)) is disordered. Residues 455 to 469 (KNNFNNNNSNNVRFN) show a composition bias toward low complexity.

Belongs to the ORC5 family. In terms of assembly, component of the origin recognition complex (ORC). Interacts with PCNA1; the interaction occurs during the trophozoite stage but not at the late schizont stage.

It localises to the nucleus. The catalysed reaction is ATP + H2O = ADP + phosphate + H(+). Functionally, component of the origin recognition complex (ORC) that binds origins of replication. This Plasmodium falciparum (isolate 3D7) protein is Origin recognition complex subunit 5.